The following is a 163-amino-acid chain: Small heat shock protein C1 (163 aa).

The sHSP domain maps to 55-163; that stretch reads TFYESSSLKS…EQDSREITIN (109 aa).

Belongs to the small heat shock protein (HSP20) family.

The polypeptide is Small heat shock protein C1 (hspC1) (Rickettsia prowazekii (strain Madrid E)).